The sequence spans 225 residues: U2 small nuclear ribonucleoprotein B'' (225 aa).

The RRM 1 domain maps to 7-86 (HTIYINNMND…KPMRIQYAKT (80 aa)). The disordered stretch occupies residues 100–144 (DKEKKKEKKKAKTMEQAAAAANKKPGQGTPNAANTQGTAAPNPQV). Position 111 is an N6-acetyllysine; alternate (Lys111). Lys111 participates in a covalent cross-link: Glycyl lysine isopeptide (Lys-Gly) (interchain with G-Cter in SUMO2); alternate. Over residues 113-123 (MEQAAAAANKK) the composition is skewed to low complexity. Over residues 127-140 (GTPNAANTQGTAAP) the composition is skewed to polar residues. Position 151 is a phosphotyrosine (Tyr151). The RRM 2 domain occupies 151–225 (YILFLNNLPE…HAMKITYAKK (75 aa)).

It belongs to the RRM U1 A/B'' family. In terms of assembly, identified in the spliceosome B complex. Identified in the spliceosome C complex. Present in a spliceosome complex assembled in vitro, and composed of SNRPB2, HPRP8BP and CRNKL1. Contributes to the binding of stem loop IV of U2 snRNA with SNRPP1.

It is found in the nucleus. Functionally, involved in pre-mRNA splicing as component of the spliceosome. Associated with sn-RNP U2, where it contributes to the binding of stem loop IV of U2 snRNA. The chain is U2 small nuclear ribonucleoprotein B'' (Snrpb2) from Mus musculus (Mouse).